The following is a 93-amino-acid chain: uncharacterized protein (93 aa).

The tract at residues 41 to 62 is disordered; that stretch reads RSANRIPTTSSTSTSGTIPTTT. Residues 46–62 show a composition bias toward low complexity; sequence IPTTSSTSTSGTIPTTT.

This is an uncharacterized protein from Dictyostelium discoideum (Social amoeba).